A 309-amino-acid chain; its full sequence is Virulence regulon transcriptional activator VirB (309 aa).

Residues 152 to 171 (KDIAKKENLSRAKVTRAFQA) constitute a DNA-binding region (H-T-H motif).

This sequence belongs to the ParB family.

Transcription activator for the invasion antigens IpaB, IpaC and IpaD. VirB is itself regulated by VirF. This chain is Virulence regulon transcriptional activator VirB (virB), found in Shigella flexneri.